A 285-amino-acid chain; its full sequence is Probable endonuclease 4 (285 aa).

Residues H69, H109, E145, D179, H182, H216, D229, H231, and E261 each contribute to the Zn(2+) site.

It belongs to the AP endonuclease 2 family. Zn(2+) is required as a cofactor.

The catalysed reaction is Endonucleolytic cleavage to 5'-phosphooligonucleotide end-products.. Its function is as follows. Endonuclease IV plays a role in DNA repair. It cleaves phosphodiester bonds at apurinic or apyrimidinic (AP) sites, generating a 3'-hydroxyl group and a 5'-terminal sugar phosphate. In Escherichia coli O1:K1 / APEC, this protein is Probable endonuclease 4.